A 119-amino-acid polypeptide reads, in one-letter code: Large ribosomal subunit protein uL22c (119 aa).

Belongs to the universal ribosomal protein uL22 family. Part of the 50S ribosomal subunit.

It is found in the plastid. The protein resides in the chloroplast. In terms of biological role, this protein binds specifically to 23S rRNA. Its function is as follows. The globular domain of the protein is located near the polypeptide exit tunnel on the outside of the subunit, while an extended beta-hairpin is found that lines the wall of the exit tunnel in the center of the 70S ribosome. This chain is Large ribosomal subunit protein uL22c (rpl22), found in Chaetosphaeridium globosum (Charophycean green alga).